The primary structure comprises 42 residues: Large ribosomal subunit protein bL36 (42 aa).

The protein belongs to the bacterial ribosomal protein bL36 family.

This chain is Large ribosomal subunit protein bL36, found in Ehrlichia chaffeensis (strain ATCC CRL-10679 / Arkansas).